A 251-amino-acid chain; its full sequence is Ly6/PLAUR domain-containing protein 5 (251 aa).

The signal sequence occupies residues methionine 1–alanine 25. Asparagine 120 and asparagine 174 each carry an N-linked (GlcNAc...) asparagine glycan. The UPAR/Ly6 domain occupies cysteine 135–asparagine 214. The GPI-anchor amidated alanine moiety is linked to residue alanine 225. Positions serine 226–alanine 251 are cleaved as a propeptide — removed in mature form.

It localises to the cell membrane. The protein is Ly6/PLAUR domain-containing protein 5 (LYPD5) of Homo sapiens (Human).